The chain runs to 152 residues: Large ribosomal subunit protein uL22 (152 aa).

The protein belongs to the universal ribosomal protein uL22 family. In terms of assembly, part of the 50S ribosomal subunit.

This protein binds specifically to 23S rRNA. It makes multiple contacts with different domains of the 23S rRNA in the assembled 50S subunit and ribosome. Its function is as follows. The globular domain of the protein is located near the polypeptide exit tunnel on the outside of the subunit, while an extended beta-hairpin is found that lines the wall of the exit tunnel in the center of the 70S ribosome. This chain is Large ribosomal subunit protein uL22, found in Nitrosopumilus maritimus (strain SCM1).